The sequence spans 87 residues: Ragulator complex protein LAMTOR4 homolog (87 aa).

Belongs to the LAMTOR4 family. As to quaternary structure, part of the Ragulator complex.

It localises to the lysosome. Its function is as follows. Regulator of the TOR pathway, a signaling cascade that promotes cell growth in response to growth factors, energy levels, and amino acids. As part of the Ragulator complex, may activate the TOR signaling cascade in response to amino acids. The polypeptide is Ragulator complex protein LAMTOR4 homolog (Dictyostelium discoideum (Social amoeba)).